We begin with the raw amino-acid sequence, 271 residues long: Phosphatidylglycerol--prolipoprotein diacylglyceryl transferase (271 aa).

4 helical membrane-spanning segments follow: residues 18 to 38 (LSVHWYGIIIGAGALLGLWMA), 51 to 71 (IFIDLVLFAIPIAIICARAYY), 89 to 109 (IWKGGIAIHGGLIGAIATGIV), and 115 to 135 (GISFWKLADIAAPSILLGQAI). Position 137 (Arg137) interacts with a 1,2-diacyl-sn-glycero-3-phospho-(1'-sn-glycerol). 3 consecutive transmembrane segments (helical) span residues 177–197 (HPTFLYESLWSFAGVVILLLL), 205–225 (GNLFLTYVIWYSIGRYFIEGM), and 236–256 (LRIAQVISIVLIVLAIILMIF).

This sequence belongs to the Lgt family.

The protein resides in the cell membrane. The enzyme catalyses L-cysteinyl-[prolipoprotein] + a 1,2-diacyl-sn-glycero-3-phospho-(1'-sn-glycerol) = an S-1,2-diacyl-sn-glyceryl-L-cysteinyl-[prolipoprotein] + sn-glycerol 1-phosphate + H(+). It participates in protein modification; lipoprotein biosynthesis (diacylglyceryl transfer). Functionally, catalyzes the transfer of the diacylglyceryl group from phosphatidylglycerol to the sulfhydryl group of the N-terminal cysteine of a prolipoprotein, the first step in the formation of mature lipoproteins. In Bacillus velezensis (strain DSM 23117 / BGSC 10A6 / LMG 26770 / FZB42) (Bacillus amyloliquefaciens subsp. plantarum), this protein is Phosphatidylglycerol--prolipoprotein diacylglyceryl transferase.